We begin with the raw amino-acid sequence, 365 residues long: Holliday junction branch migration complex subunit RuvB (365 aa).

The segment covering 1 to 10 (MAIVSSNAAS) has biased composition (polar residues). The disordered stretch occupies residues 1–48 (MAIVSSNAASQRPRPDRGPDRVPNRVVDGARQAEDDRDPGRVGAKEDS). Composition is skewed to basic and acidic residues over residues 13–23 (PRPDRGPDRVP) and 31–48 (RQAE…KEDS). Residues 13 to 210 (PRPDRGPDRV…FGLIQRLEFY (198 aa)) are large ATPase domain (RuvB-L). ATP-binding residues include Leu49, Arg50, Gly91, Lys94, Thr95, Thr96, Arg200, Tyr210, and Arg247. Residue Thr95 coordinates Mg(2+). The tract at residues 211–282 (GLEDLQAIVE…LVDEALTLHR (72 aa)) is small ATPAse domain (RuvB-S). Residues 285–365 (GRGLDASDRR…GWPYPQEQAA (81 aa)) are head domain (RuvB-H). The DNA site is built by Arg340 and Arg345.

Belongs to the RuvB family. In terms of assembly, homohexamer. Forms an RuvA(8)-RuvB(12)-Holliday junction (HJ) complex. HJ DNA is sandwiched between 2 RuvA tetramers; dsDNA enters through RuvA and exits via RuvB. An RuvB hexamer assembles on each DNA strand where it exits the tetramer. Each RuvB hexamer is contacted by two RuvA subunits (via domain III) on 2 adjacent RuvB subunits; this complex drives branch migration. In the full resolvosome a probable DNA-RuvA(4)-RuvB(12)-RuvC(2) complex forms which resolves the HJ.

It is found in the cytoplasm. It catalyses the reaction ATP + H2O = ADP + phosphate + H(+). Functionally, the RuvA-RuvB-RuvC complex processes Holliday junction (HJ) DNA during genetic recombination and DNA repair, while the RuvA-RuvB complex plays an important role in the rescue of blocked DNA replication forks via replication fork reversal (RFR). RuvA specifically binds to HJ cruciform DNA, conferring on it an open structure. The RuvB hexamer acts as an ATP-dependent pump, pulling dsDNA into and through the RuvAB complex. RuvB forms 2 homohexamers on either side of HJ DNA bound by 1 or 2 RuvA tetramers; 4 subunits per hexamer contact DNA at a time. Coordinated motions by a converter formed by DNA-disengaged RuvB subunits stimulates ATP hydrolysis and nucleotide exchange. Immobilization of the converter enables RuvB to convert the ATP-contained energy into a lever motion, pulling 2 nucleotides of DNA out of the RuvA tetramer per ATP hydrolyzed, thus driving DNA branch migration. The RuvB motors rotate together with the DNA substrate, which together with the progressing nucleotide cycle form the mechanistic basis for DNA recombination by continuous HJ branch migration. Branch migration allows RuvC to scan DNA until it finds its consensus sequence, where it cleaves and resolves cruciform DNA. The protein is Holliday junction branch migration complex subunit RuvB of Synechococcus sp. (strain WH7803).